A 204-amino-acid polypeptide reads, in one-letter code: Inner membrane protein YagU (204 aa).

The Periplasmic segment spans residues 1–14 (MNIFEQTPPNRRRY). Residues 15-35 (GLAAFIGLIAGVVSAFVKWGA) form a helical membrane-spanning segment. At 36–100 (EVPLPPRSPV…VYTFAGHVFN (65 aa)) the chain is on the cytoplasmic side. A helical transmembrane segment spans residues 101–121 (WVGVTHIIFSIVFAVGYCVVA). Residues 122-132 (EVFPKIKLWQG) lie on the Periplasmic side of the membrane. Residues 133-153 (LLAGALAQLFVHMISFPLMGL) form a helical membrane-spanning segment. Residues 154–204 (TPPLFDLPWYENVSEIFGHLVWFWSIEIIRRDLRNRITHEPDPEIPLGSNR) are Cytoplasmic-facing.

In terms of assembly, homodimer.

Its subcellular location is the cell inner membrane. The chain is Inner membrane protein YagU (yagU) from Escherichia coli (strain K12).